The following is a 184-amino-acid chain: Ribosome-recycling factor (184 aa).

Belongs to the RRF family.

The protein localises to the cytoplasm. Its function is as follows. Responsible for the release of ribosomes from messenger RNA at the termination of protein biosynthesis. May increase the efficiency of translation by recycling ribosomes from one round of translation to another. This chain is Ribosome-recycling factor, found in Borrelia garinii subsp. bavariensis (strain ATCC BAA-2496 / DSM 23469 / PBi) (Borreliella bavariensis).